The sequence spans 460 residues: NADH-ubiquinone oxidoreductase chain 4 (460 aa).

The next 13 helical transmembrane spans lie at 20–42 (SKWL…LTWL), 61–81 (PLST…ILAS), 94–113 (RMYI…AFGA), 114–134 (TKII…LIII), 148–168 (TYFL…LLLL), 195–215 (IWWA…GMHL), 225–245 (PVAG…YGMM), 258–278 (LAYP…LVCL), 285–304 (SLIA…GILI), 308–330 (WGFT…LFCL), 351–371 (MVLP…LALP), 380–400 (LMII…TGMG), and 436–456 (LLMT…ELMW).

The protein belongs to the complex I subunit 4 family. Core subunit of respiratory chain NADH dehydrogenase (Complex I) which is composed of 45 different subunits.

It is found in the mitochondrion inner membrane. It catalyses the reaction a ubiquinone + NADH + 5 H(+)(in) = a ubiquinol + NAD(+) + 4 H(+)(out). Functionally, core subunit of the mitochondrial membrane respiratory chain NADH dehydrogenase (Complex I) which catalyzes electron transfer from NADH through the respiratory chain, using ubiquinone as an electron acceptor. Essential for the catalytic activity and assembly of complex I. The polypeptide is NADH-ubiquinone oxidoreductase chain 4 (mt-nd4) (Danio rerio (Zebrafish)).